A 360-amino-acid chain; its full sequence is Phospho-N-acetylmuramoyl-pentapeptide-transferase (360 aa).

10 helical membrane-spanning segments follow: residues 25-45 (RAILSVLTALVLSLWLGPTLI), 73-93 (TMGGVLILAAVLGSSLLWADL), 97-117 (YVWVVLLVTTGFGIVGFVDDY), 128-148 (LIAKWKYFWQSVIASVAAVYL), 168-188 (VMPQLGMLYMLMAYFVIVGTS), 199-219 (GLAIMPTIMVAAALGIFAYVS), 236-256 (TAELLVVCTAIVGAGLGFLWF), 262-282 (LVFMGDVGSLALGAALGIIAI), 288-308 (LVLFIMGGVFVMETLSVMLQV), and 338-358 (VIVRFWILSLIFVLIGLATLK).

This sequence belongs to the glycosyltransferase 4 family. MraY subfamily. Requires Mg(2+) as cofactor.

Its subcellular location is the cell inner membrane. The enzyme catalyses UDP-N-acetyl-alpha-D-muramoyl-L-alanyl-gamma-D-glutamyl-meso-2,6-diaminopimeloyl-D-alanyl-D-alanine + di-trans,octa-cis-undecaprenyl phosphate = di-trans,octa-cis-undecaprenyl diphospho-N-acetyl-alpha-D-muramoyl-L-alanyl-D-glutamyl-meso-2,6-diaminopimeloyl-D-alanyl-D-alanine + UMP. It participates in cell wall biogenesis; peptidoglycan biosynthesis. Its function is as follows. Catalyzes the initial step of the lipid cycle reactions in the biosynthesis of the cell wall peptidoglycan: transfers peptidoglycan precursor phospho-MurNAc-pentapeptide from UDP-MurNAc-pentapeptide onto the lipid carrier undecaprenyl phosphate, yielding undecaprenyl-pyrophosphoryl-MurNAc-pentapeptide, known as lipid I. The polypeptide is Phospho-N-acetylmuramoyl-pentapeptide-transferase (Idiomarina loihiensis (strain ATCC BAA-735 / DSM 15497 / L2-TR)).